The sequence spans 139 residues: Acidic phospholipase A2 DE-I (139 aa).

Positions Met1 to Gly16 are cleaved as a signal peptide. Disulfide bonds link Cys42–Cys132, Cys44–Cys60, Cys59–Cys111, Cys65–Cys139, Cys66–Cys104, Cys73–Cys97, and Cys91–Cys102. Tyr43, Gly45, and Gly47 together coordinate Ca(2+). His63 is an active-site residue. Asp64 serves as a coordination point for Ca(2+). The active site involves Asp105.

Requires Ca(2+) as cofactor. As to expression, expressed by the venom gland.

It localises to the secreted. It carries out the reaction a 1,2-diacyl-sn-glycero-3-phosphocholine + H2O = a 1-acyl-sn-glycero-3-phosphocholine + a fatty acid + H(+). In terms of biological role, snake venom phospholipase A2 (PLA2) that inhibits the ADP- and collagen-induced human platelet aggregation. Exhibits high hydrolytic activities and preferred the anionic micelles to the zwitterionic micelles. PLA2 catalyzes the calcium-dependent hydrolysis of the 2-acyl groups in 3-sn-phosphoglycerides. The chain is Acidic phospholipase A2 DE-I from Ovophis okinavensis (Ryukyu Island pit viper).